Here is a 185-residue protein sequence, read N- to C-terminus: Anterior gradient protein 2 (185 aa).

Positions 1-18 are cleaved as a signal peptide; it reads MQTGLSLACLVLLCSVLG. The tract at residues 25-45 is disordered; that stretch reads PKRQAGATDTNGAAKSEPAPV.

This sequence belongs to the AGR family. In terms of tissue distribution, expressed in the anterior of the dorsal ectoderm from late gastrula stages onwards. Becomes restricted to the cement gland anlage at the onset of neurulation (stages 13 to 14) and expressed exclusively in the cement gland from stage 18 onwards, with transient expression in the hatching gland during tailbud stages.

Its subcellular location is the secreted. Involved in cement gland formation; probably specifies dorsal ectoderm to acquire an anterior fate such as cement gland and forebrain. Signals via the FGF pathway. The protein is Anterior gradient protein 2 (ag2) of Xenopus laevis (African clawed frog).